Here is a 174-residue protein sequence, read N- to C-terminus: RNA pyrophosphohydrolase (174 aa).

Residues 6-149 form the Nudix hydrolase domain; sequence GYRPNVGIVI…KRDVYRRALK (144 aa). Residues 38–59 carry the Nudix box motif; that stretch reads GGIDEGETPEQAMYRELYEEVG.

Belongs to the Nudix hydrolase family. RppH subfamily. A divalent metal cation is required as a cofactor.

Functionally, accelerates the degradation of transcripts by removing pyrophosphate from the 5'-end of triphosphorylated RNA, leading to a more labile monophosphorylated state that can stimulate subsequent ribonuclease cleavage. The sequence is that of RNA pyrophosphohydrolase from Photobacterium profundum (strain SS9).